A 163-amino-acid chain; its full sequence is MNPRRKKRLTIILAISAGLAAVIGLVLYALSQNIDLFYTPSELVEGKGPDKIKPEEGQRLRIGGLVVPGSVLRDQQSLKVAFKLVDNGGHLVTVEFDGILPDLFREGQGIVAQGTLKNATTVEAFEVLAKHDENYMPPEVADATNGMHFKPEYTEAQLKGAKQ.

The Cytoplasmic segment spans residues 1–8 (MNPRRKKR). The chain crosses the membrane as a helical; Signal-anchor for type II membrane protein span at residues 9–29 (LTIILAISAGLAAVIGLVLYA). Residues 30–163 (LSQNIDLFYT…TEAQLKGAKQ (134 aa)) lie on the Periplasmic side of the membrane. Residues H131 and Y135 each contribute to the heme site.

It belongs to the CcmE/CycJ family.

The protein resides in the cell inner membrane. Heme chaperone required for the biogenesis of c-type cytochromes. Transiently binds heme delivered by CcmC and transfers the heme to apo-cytochromes in a process facilitated by CcmF and CcmH. In Aeromonas salmonicida (strain A449), this protein is Cytochrome c-type biogenesis protein CcmE.